Here is a 315-residue protein sequence, read N- to C-terminus: NAD-dependent protein lipoamidase sirtuin-4, mitochondrial (315 aa).

The transit peptide at 1 to 29 (MRMSFGLTFKRTAKVHWRANFSQQCSLRS) directs the protein to the mitochondrion. One can recognise a Deacetylase sirtuin-type domain in the interval 38–315 (PPLDPEKVKE…GELLPLIDPR (278 aa)). NAD(+)-binding positions include 63–83 (GAGI…VGLY) and 144–147 (QNVD). Histidine 162 (proton acceptor) is an active-site residue. The Zn(2+) site is built by cysteine 170, cysteine 173, cysteine 221, and cysteine 224. Residues 261-263 (GSS), 287-289 (NIG), and cysteine 305 each bind NAD(+).

This sequence belongs to the sirtuin family. Class II subfamily. Interacts with GLUD1, IDE and SLC25A5. Interacts with DLAT and PDHX. Interacts with MCCC1 (via the biotin carboxylation domain). Interacts with PCCA and PC. Zn(2+) is required as a cofactor.

It is found in the mitochondrion matrix. The catalysed reaction is N(6)-[(R)-lipoyl]-L-lysyl-[protein] + NAD(+) + H2O = 2''-O-lipoyl-ADP-D-ribose + nicotinamide + L-lysyl-[protein]. It carries out the reaction N(6)-biotinyl-L-lysyl-[protein] + NAD(+) + H2O = 2''-O-biotinyl-ADP-D-ribose + nicotinamide + L-lysyl-[protein]. The enzyme catalyses N(6)-acetyl-L-lysyl-[protein] + NAD(+) + H2O = 2''-O-acetyl-ADP-D-ribose + nicotinamide + L-lysyl-[protein]. It catalyses the reaction L-cysteinyl-[protein] + NAD(+) = S-(ADP-D-ribosyl)-L-cysteinyl-[protein] + nicotinamide + H(+). Its function is as follows. Acts as a NAD-dependent protein lipoamidase, biotinylase, deacetylase and ADP-ribosyl transferase. Catalyzes more efficiently removal of lipoyl- and biotinyl- than acetyl-lysine modifications. Inhibits the pyruvate dehydrogenase complex (PDH) activity via the enzymatic hydrolysis of the lipoamide cofactor from the E2 component, DLAT, in a phosphorylation-independent manner. Catalyzes the transfer of ADP-ribosyl groups onto target proteins, including mitochondrial GLUD1, inhibiting GLUD1 enzyme activity. Acts as a negative regulator of mitochondrial glutamine metabolism by mediating mono ADP-ribosylation of GLUD1: expressed in response to DNA damage and negatively regulates anaplerosis by inhibiting GLUD1, leading to block metabolism of glutamine into tricarboxylic acid cycle and promoting cell cycle arrest. In response to mTORC1 signal, SIRT4 expression is repressed, promoting anaplerosis and cell proliferation. Acts as a tumor suppressor. Also acts as a NAD-dependent protein deacetylase: mediates deacetylation of 'Lys-471' of MLYCD, inhibiting its activity, thereby acting as a regulator of lipid homeostasis. Does not seem to deacetylate PC. Controls fatty acid oxidation by inhibiting PPARA transcriptional activation. Impairs SIRT1-PPARA interaction probably through the regulation of NAD(+) levels. Down-regulates insulin secretion. This chain is NAD-dependent protein lipoamidase sirtuin-4, mitochondrial, found in Bos taurus (Bovine).